The primary structure comprises 689 residues: Methionine--tRNA ligase (689 aa).

Residues 19 to 29 (PYPTGDLHIGH) carry the 'HIGH' region motif. Residues C150, C153, C162, and C166 each contribute to the Zn(2+) site. A 'KMSKS' region motif is present at residues 338–342 (GLSTS). T341 is a binding site for ATP. The region spanning 591–689 (EFQALDLRVG…EDSEPGTKVM (99 aa)) is the tRNA-binding domain.

The protein belongs to the class-I aminoacyl-tRNA synthetase family. MetG type 1 subfamily. As to quaternary structure, homodimer. Zn(2+) serves as cofactor.

The protein resides in the cytoplasm. It catalyses the reaction tRNA(Met) + L-methionine + ATP = L-methionyl-tRNA(Met) + AMP + diphosphate. Its function is as follows. Is required not only for elongation of protein synthesis but also for the initiation of all mRNA translation through initiator tRNA(fMet) aminoacylation. This Halobacterium salinarum (strain ATCC 700922 / JCM 11081 / NRC-1) (Halobacterium halobium) protein is Methionine--tRNA ligase.